The following is a 317-amino-acid chain: MAELACFCYPHLENDSYKFIPFNNLAIKCMLTAKVDKKDQDKFYNSIIYGIAPPPQFKKRYNTNDNSRGMNYETPMLIKVAILICEALNSIKVTQSDVANVLSRVVSVRHLENLVLRKENHQDVLFHSKELLLKSVLIAIGQSKEIETTATAEGGEIVFQNVAFTMWKLTYLDHKLMPILDQNFIEYKITMNEDKPISDVHVKELIAELRWQYNRFAVITHGKGHYRVVKYSSVANHADRVFATYKNNAKSGNVIDFNLLDQRIIWQNWYAFTSSMKQGFTLDVCKKLLFQKMKQERNPFKGLSTDRKMDEVSRIGI.

ATP is bound by residues Ser-107–Arg-109, Lys-188, and His-221–Lys-223. Residues Leu-205 to Val-241 form an RNA-binding region. His-225 (for NTPase and RTPase activities) is an active-site residue. Arg-227 lines the ATP pocket.

Belongs to the rotavirus NSP2 family. Homooctamer. Interacts with VP1; this interaction is weak. Interacts with NSP5; this interaction leads to up-regulation of NSP5 phosphorylation and formation of viral factories. Interacts with host DCP1A, DCP1B, DDX6, EDC4 and EIF2S1/eIF2-alpha; these interactions are probably part of the sequestration of some host SGs and PBs proteins in viral factories. Mg(2+) is required as a cofactor.

The protein localises to the host cytoplasm. Its function is as follows. Participates in replication and packaging of the viral genome. Plays a crucial role, together with NSP5, in the formation of virus factories (viroplasms), which are large inclusions in the host cytoplasm where replication intermediates are assembled and viral RNA replication takes place. Displays ssRNA binding, NTPase, RNA triphosphatase (RTPase) and ATP-independent helix-unwinding activities. The unwinding activity may prepare and organize plus-strand RNAs for packaging and replication by removing interfering secondary structures. The RTPase activity plays a role in the removal of the gamma-phosphate from the rotavirus RNA minus strands of dsRNA genome segments. Participates in the selective exclusion of host proteins from stress granules (SG) and P bodies (PB). Also participates in the sequestration of these remodeled organelles in viral factories. The protein is Non-structural protein 2 of Rotavirus A (strain RVA/Human/Japan/KU/1995/G1P1A[8]) (RV-A).